A 468-amino-acid chain; its full sequence is Probable cytosol aminopeptidase (468 aa).

Mn(2+)-binding residues include lysine 242 and aspartate 247. Residue lysine 254 is part of the active site. The Mn(2+) site is built by aspartate 265, aspartate 324, and glutamate 326. Arginine 328 is an active-site residue.

Belongs to the peptidase M17 family. The cofactor is Mn(2+).

It is found in the cytoplasm. It catalyses the reaction Release of an N-terminal amino acid, Xaa-|-Yaa-, in which Xaa is preferably Leu, but may be other amino acids including Pro although not Arg or Lys, and Yaa may be Pro. Amino acid amides and methyl esters are also readily hydrolyzed, but rates on arylamides are exceedingly low.. The enzyme catalyses Release of an N-terminal amino acid, preferentially leucine, but not glutamic or aspartic acids.. Its function is as follows. Presumably involved in the processing and regular turnover of intracellular proteins. Catalyzes the removal of unsubstituted N-terminal amino acids from various peptides. In Neisseria meningitidis serogroup A / serotype 4A (strain DSM 15465 / Z2491), this protein is Probable cytosol aminopeptidase.